Consider the following 159-residue polypeptide: NADH-quinone oxidoreductase subunit B (159 aa).

Residues Cys-36, Cys-37, Cys-102, and Cys-132 each coordinate [4Fe-4S] cluster.

The protein belongs to the complex I 20 kDa subunit family. NDH-1 is composed of 14 different subunits. Subunits NuoB, C, D, E, F, and G constitute the peripheral sector of the complex. [4Fe-4S] cluster is required as a cofactor.

The protein localises to the cell inner membrane. The enzyme catalyses a quinone + NADH + 5 H(+)(in) = a quinol + NAD(+) + 4 H(+)(out). Its function is as follows. NDH-1 shuttles electrons from NADH, via FMN and iron-sulfur (Fe-S) centers, to quinones in the respiratory chain. Couples the redox reaction to proton translocation (for every two electrons transferred, four hydrogen ions are translocated across the cytoplasmic membrane), and thus conserves the redox energy in a proton gradient. In Delftia acidovorans (strain DSM 14801 / SPH-1), this protein is NADH-quinone oxidoreductase subunit B.